Reading from the N-terminus, the 286-residue chain is Probable xyloglucan endotransglucosylase/hydrolase protein 23 (286 aa).

The signal sequence occupies residues 1 to 24 (MAMISYSTIVVALLASFMICSVSA). The GH16 domain occupies 25–214 (NFQRDVEITW…WSKAPFTASY (190 aa)). The Nucleophile role is filled by Glu-100. Glu-104 functions as the Proton donor in the catalytic mechanism. Glu-104 provides a ligand contact to xyloglucan. The N-linked (GlcNAc...) asparagine glycan is linked to Asn-108. Xyloglucan contacts are provided by residues 117–119 (HTN), 127–129 (DRE), 193–194 (EW), and Gly-198. Cys-222 and Cys-231 are oxidised to a cystine. A glycan (N-linked (GlcNAc...) asparagine) is linked at Asn-233. Cys-269 and Cys-283 are disulfide-bonded. Arg-274 provides a ligand contact to xyloglucan.

The protein belongs to the glycosyl hydrolase 16 family. XTH group 2 subfamily. Contains at least one intrachain disulfide bond essential for its enzymatic activity.

Its subcellular location is the secreted. The protein localises to the cell wall. It is found in the extracellular space. It localises to the apoplast. The catalysed reaction is breaks a beta-(1-&gt;4) bond in the backbone of a xyloglucan and transfers the xyloglucanyl segment on to O-4 of the non-reducing terminal glucose residue of an acceptor, which can be a xyloglucan or an oligosaccharide of xyloglucan.. In terms of biological role, catalyzes xyloglucan endohydrolysis (XEH) and/or endotransglycosylation (XET). Cleaves and religates xyloglucan polymers, an essential constituent of the primary cell wall, and thereby participates in cell wall construction of growing tissues. The sequence is that of Probable xyloglucan endotransglucosylase/hydrolase protein 23 (XTH23) from Arabidopsis thaliana (Mouse-ear cress).